The chain runs to 184 residues: Ribosome-recycling factor (184 aa).

Belongs to the RRF family.

It localises to the cytoplasm. Responsible for the release of ribosomes from messenger RNA at the termination of protein biosynthesis. May increase the efficiency of translation by recycling ribosomes from one round of translation to another. The protein is Ribosome-recycling factor of Aquifex aeolicus (strain VF5).